Reading from the N-terminus, the 372-residue chain is Ribosomal RNA small subunit methyltransferase H (372 aa).

Residues 78–80, aspartate 97, tyrosine 124, aspartate 148, and glutamine 155 contribute to the S-adenosyl-L-methionine site; that span reads GGH.

This sequence belongs to the methyltransferase superfamily. RsmH family.

It is found in the cytoplasm. The enzyme catalyses cytidine(1402) in 16S rRNA + S-adenosyl-L-methionine = N(4)-methylcytidine(1402) in 16S rRNA + S-adenosyl-L-homocysteine + H(+). Its function is as follows. Specifically methylates the N4 position of cytidine in position 1402 (C1402) of 16S rRNA. The sequence is that of Ribosomal RNA small subunit methyltransferase H from Mycobacterium leprae (strain Br4923).